Reading from the N-terminus, the 353-residue chain is Phosphate acyltransferase (353 aa).

The protein belongs to the PlsX family. Homodimer. Probably interacts with PlsY.

It localises to the cytoplasm. It catalyses the reaction a fatty acyl-[ACP] + phosphate = an acyl phosphate + holo-[ACP]. Its pathway is lipid metabolism; phospholipid metabolism. Its function is as follows. Catalyzes the reversible formation of acyl-phosphate (acyl-PO(4)) from acyl-[acyl-carrier-protein] (acyl-ACP). This enzyme utilizes acyl-ACP as fatty acyl donor, but not acyl-CoA. The polypeptide is Phosphate acyltransferase (Myxococcus xanthus (strain DK1622)).